The following is an 84-amino-acid chain: Toxin Ts4 (84 aa).

The signal sequence occupies residues 1–19 (MKRMILFISCLLLIDIVVG). The LCN-type CS-alpha/beta domain maps to 21–82 (REGYPADSKG…IWTSETNKCG (62 aa)). 4 disulfide bridges follow: Cys-31/Cys-81, Cys-35/Cys-57, Cys-43/Cys-62, and Cys-47/Cys-64. Cys-81 is modified (cysteine amide). A propeptide spanning residues 82–84 (GKK) is cleaved from the precursor.

It belongs to the long (4 C-C) scorpion toxin superfamily. Sodium channel inhibitor family. Alpha subfamily. In terms of tissue distribution, expressed by the venom gland.

Its subcellular location is the secreted. Not toxic. Induces an immune response similar to that induced by whole venom. Induces a dose dependent release of the neurotransmitters glutamic acid and gamma aminobutyric acid from rat brain synaptosomes. Thus, polyclonal antibodies raised against this protein can neutralize the effects of the venom. In Tityus serrulatus (Brazilian scorpion), this protein is Toxin Ts4.